The sequence spans 1134 residues: DNA damage-binding protein 1 (1134 aa).

This sequence belongs to the DDB1 family. Interacts with cdt-1 and cul-4. Expressed at high levels in the spermatheca of adult hermaphrodites.

The protein resides in the cytoplasm. It is found in the nucleus. The protein operates within protein modification; protein ubiquitination. Functionally, plays a role in DNA repair. May be a component of an E3 ubiquitin-protein ligase which promotes histone ubiquitination in response to UV irradiation. Histone ubiquitination may be important for subsequent DNA repair. Promotes the degradation of the replication licensing factor cdt-1 during S-phase, thereby preventing rereplication of DNA during a single round of cell division. This is DNA damage-binding protein 1 (ddb-1) from Caenorhabditis elegans.